A 524-amino-acid polypeptide reads, in one-letter code: GMP synthase [glutamine-hydrolyzing] (524 aa).

Positions 12–201 constitute a Glutamine amidotransferase type-1 domain; the sequence is TILVLDFGSQ…AVDICKASQS (190 aa). The active-site Nucleophile is the cysteine 88. Active-site residues include histidine 175 and glutamate 177. The GMPS ATP-PPase domain maps to 202–399; sequence WNMENFIDTE…LGISHELVWR (198 aa). Residue 230–236 coordinates ATP; it reads SGGVDST. Positions 303, 461, 516, and 522 each coordinate XMP.

As to quaternary structure, homodimer. It depends on Mg(2+) as a cofactor.

Its subcellular location is the cytoplasm. The protein resides in the cytosol. The catalysed reaction is XMP + L-glutamine + ATP + H2O = GMP + L-glutamate + AMP + diphosphate + 2 H(+). The protein operates within purine metabolism; GMP biosynthesis; GMP from XMP (L-Gln route): step 1/1. Its function is as follows. Catalyzes the conversion of xanthine monophosphate (XMP) to GMP in the presence of glutamine and ATP through an adenyl-XMP intermediate. This is GMP synthase [glutamine-hydrolyzing] (GUA1) from Kluyveromyces lactis (strain ATCC 8585 / CBS 2359 / DSM 70799 / NBRC 1267 / NRRL Y-1140 / WM37) (Yeast).